The primary structure comprises 457 residues: uncharacterized protein (457 aa).

A run of 2 helical transmembrane segments spans residues 1 to 21 (MVSSLASNIILALVVVLMTLL) and 250 to 270 (ILIVTPGAGVGGLSHTLATTF).

The protein localises to the membrane. This is an uncharacterized protein from Saccharomyces cerevisiae (strain ATCC 204508 / S288c) (Baker's yeast).